The primary structure comprises 66 residues: Toxin Boma6c (66 aa).

The region spanning 2-64 (RDAYIAQNYN…VPIRIPGKCH (63 aa)) is the LCN-type CS-alpha/beta domain. Intrachain disulfides connect Cys12–Cys63, Cys16–Cys36, Cys22–Cys46, and Cys26–Cys48.

This sequence belongs to the long (4 C-C) scorpion toxin superfamily. Sodium channel inhibitor family. Alpha subfamily. Expressed by the venom gland.

The protein resides in the secreted. Its function is as follows. Alpha toxins bind voltage-independently at site-3 of sodium channels (Nav) and inhibit the inactivation of the activated channels, thereby blocking neuronal transmission. In Buthus occitanus mardochei (Moroccan scorpion), this protein is Toxin Boma6c.